Reading from the N-terminus, the 121-residue chain is uncharacterized protein (121 aa).

A disordered region spans residues 101 to 121 (TVVKKEDVRESPVDTFMENAT). The segment covering 102-112 (VVKKEDVRESP) has biased composition (basic and acidic residues).

This is an uncharacterized protein from Schizosaccharomyces pombe (strain 972 / ATCC 24843) (Fission yeast).